The sequence spans 72 residues: SPbeta prophage-derived uncharacterized protein YoqN (72 aa).

The protein is SPbeta prophage-derived uncharacterized protein YoqN (yoqN) of Bacillus subtilis (strain 168).